A 291-amino-acid polypeptide reads, in one-letter code: Potassium-transporting ATPase subunit beta (291 aa).

The Cytoplasmic portion of the chain corresponds to 1–36; that stretch reads MAALQEKKTCGQRMEEFQRYCWNPDTGQMLGRTLSR. Residues 37–57 traverse the membrane as a helical; Signal-anchor for type II membrane protein segment; sequence WVWISLYYVAFYVVMTGLFAL. The Extracellular portion of the chain corresponds to 58-291; the sequence is CLYVLMQTVD…KVEFKLKIEK (234 aa). 5 N-linked (GlcNAc...) asparagine glycosylation sites follow: N99, N103, N130, N146, and N161. C131 and C152 are joined by a disulfide. Residues C162 and C178 are joined by a disulfide bond. N-linked (GlcNAc...) asparagine glycans are attached at residues N193 and N222. The tract at residues 194–291 is immunoglobulin-like; the sequence is GSAPRVDCAF…KVEFKLKIEK (98 aa). C201 and C263 form a disulfide bridge.

The protein belongs to the X(+)/potassium ATPases subunit beta family. In terms of assembly, the ATPase pump is composed of two subunits: alpha (catalytic) and beta (regulatory). Interacts with alpha subunit ATP12A; this interaction is required for the formation of a functionally active pump and targeting at the plasma membrane. Interacts (via N-terminus) with alpha subunit ATP4A (via the P-domain). N-glycosylation is necessary for assembly and functional expression of the pump at the plasma membrane.

It is found in the apical cell membrane. The protein localises to the cell membrane. Functionally, the beta subunit of the gastric H(+)/K(+) ATPase pump which transports H(+) ions in exchange for K(+) ions across the apical membrane of parietal cells. Plays a structural and regulatory role in the assembly and membrane targeting of a functionally active pump. Within a transport cycle, the transfer of a H(+) ion across the membrane is coupled to ATP hydrolysis and is associated with a transient phosphorylation of the alpha subunit that shifts the pump conformation from inward-facing (E1) to outward-facing state (E2). Interacts with the phosphorylation domain of the alpha subunit and functions as a ratchet, stabilizing the lumenal-open E2 conformation and preventing the reverse reaction of the transport cycle. This Homo sapiens (Human) protein is Potassium-transporting ATPase subunit beta.